The chain runs to 222 residues: Protein-L-isoaspartate O-methyltransferase (222 aa).

The active site involves serine 68.

Belongs to the methyltransferase superfamily. L-isoaspartyl/D-aspartyl protein methyltransferase family.

Its subcellular location is the cytoplasm. It catalyses the reaction [protein]-L-isoaspartate + S-adenosyl-L-methionine = [protein]-L-isoaspartate alpha-methyl ester + S-adenosyl-L-homocysteine. In terms of biological role, catalyzes the methyl esterification of L-isoaspartyl residues in peptides and proteins that result from spontaneous decomposition of normal L-aspartyl and L-asparaginyl residues. It plays a role in the repair and/or degradation of damaged proteins. The polypeptide is Protein-L-isoaspartate O-methyltransferase (Koribacter versatilis (strain Ellin345)).